A 295-amino-acid polypeptide reads, in one-letter code: Ethanolamine ammonia-lyase small subunit (295 aa).

3 residues coordinate adenosylcob(III)alamin: valine 207, glutamate 228, and cysteine 258.

Belongs to the EutC family. In terms of assembly, the basic unit is a heterodimer which dimerizes to form tetramers. The heterotetramers trimerize; 6 large subunits form a core ring with 6 small subunits projecting outwards. Adenosylcob(III)alamin is required as a cofactor.

Its subcellular location is the bacterial microcompartment. The catalysed reaction is ethanolamine = acetaldehyde + NH4(+). It participates in amine and polyamine degradation; ethanolamine degradation. Its function is as follows. Catalyzes the deamination of various vicinal amino-alcohols to oxo compounds. Allows this organism to utilize ethanolamine as the sole source of nitrogen and carbon in the presence of external vitamin B12. The chain is Ethanolamine ammonia-lyase small subunit from Shigella sonnei (strain Ss046).